The sequence spans 535 residues: MQEKWWHNAVVYQVYPKSFMDSNGDGVGDLPGITSKLDYLAKLGITAIWLSPVYDSPMDDNGYDIADYQAIAAIFGTMEDMDQLIAEAKKRDIRIIMDLVVNHTSDEHAWFVEACENTDSPERDYYIWRDEPNDLDSIFSGSAWEYDEKSGQYYLHFFSKKQPDLNWENEKLRQKIYEMMNFWIDKGIGGFRMDVIDMIGKIPDEKVVNNGPMLHPYLKEMNQATFGDKDLLTVGETWGATPEIAKFYSDPKGQELSMVFQFEHIGLQYQEGQPKWHYQKELNIAKLKEIFNKWQTELGVEDGWNSLFWNNHDLPRIVSIWGNDQEYREKSAKAFAILLHLMRGTPYIYQGEEIGMTNYPFETLDQVEDIESLNYAREALEKGVPIEEIMDSIRVIGRDNARTPMQWDESKNAGFSTGQPWLAVNPNYEMINVQEALANPDSIFYTYQKLVQIRKENSWLVRADFELLDTADKVFAYIRKDGDRRFLVVANLSNEEQDLTVEGKVKSVLIENTAAKEVLEKQVLAPWDAFCVELL.

Residue D194 is the Nucleophile of the active site. The active-site Proton donor is the E236.

Belongs to the glycosyl hydrolase 13 family.

The protein resides in the cytoplasm. It carries out the reaction Hydrolysis of (1-&gt;6)-alpha-D-glucosidic linkages in (1-&gt;6)-alpha-D-glucans and derived oligosaccharides.. In terms of biological role, the physiological substrates may be short isomaltosaccharides. This chain is Glucan 1,6-alpha-glucosidase (dexB), found in Streptococcus pneumoniae serotype 4 (strain ATCC BAA-334 / TIGR4).